A 987-amino-acid chain; its full sequence is ATP-dependent 6-phosphofructokinase subunit alpha (987 aa).

The N-terminal catalytic PFK domain 1 stretch occupies residues 1–580 (MQSQDSCYGV…LYENFLSTTV (580 aa)). Position 3 is a phosphoserine (serine 3). A Glycyl lysine isopeptide (Lys-Gly) (interchain with G-Cter in ubiquitin) cross-link involves residue lysine 89. 5 positions are modified to phosphoserine: serine 166, serine 179, serine 185, serine 189, and serine 192. ATP is bound at residue glycine 215. Residue serine 217 is modified to Phosphoserine. ATP-binding positions include 278 to 279 (RS) and 308 to 311 (GDGS). Position 309 (aspartate 309) interacts with Mg(2+). Beta-D-fructose 6-phosphate contacts are provided by residues 354–356 (SID), arginine 391, and 398–400 (MGR). Aspartate 356 acts as the Proton acceptor in catalysis. A Phosphothreonine modification is found at threonine 450. Beta-D-fructose 6-phosphate is bound by residues glutamate 455, lysine 482, and 488–491 (HVQR). The interval 581–594 (KDDGSELLPVSDRL) is interdomain linker. The interval 595-987 (NIGIVHVGAP…EVAALAAENK (393 aa)) is C-terminal regulatory PFK domain 2. A Glycyl lysine isopeptide (Lys-Gly) (interchain with G-Cter in ubiquitin) cross-link involves residue lysine 625. Residues arginine 665, 722 to 726 (TVSNN), arginine 760, 767 to 769 (QGG), glutamate 827, arginine 853, 859 to 862 (HVQQ), and arginine 952 contribute to the beta-D-fructose 2,6-bisphosphate site.

Belongs to the phosphofructokinase type A (PFKA) family. ATP-dependent PFK group I subfamily. Eukaryotic two domain clade 'E' sub-subfamily. In terms of assembly, heterooctamer of 4 alpha and 4 beta chains. Mg(2+) serves as cofactor.

The protein resides in the cytoplasm. The protein localises to the mitochondrion outer membrane. It carries out the reaction beta-D-fructose 6-phosphate + ATP = beta-D-fructose 1,6-bisphosphate + ADP + H(+). It functions in the pathway carbohydrate degradation; glycolysis; D-glyceraldehyde 3-phosphate and glycerone phosphate from D-glucose: step 3/4. Its activity is regulated as follows. Allosterically activated by ADP, AMP, or fructose 2,6-bisphosphate, and allosterically inhibited by ATP or citrate. Functionally, catalyzes the phosphorylation of D-fructose 6-phosphate to fructose 1,6-bisphosphate by ATP, the first committing step of glycolysis. The protein is ATP-dependent 6-phosphofructokinase subunit alpha (PFK1) of Saccharomyces cerevisiae (strain ATCC 204508 / S288c) (Baker's yeast).